The primary structure comprises 115 residues: MRYVASYLLAALGGNSSPSAKDIKKILDSVGIEADDDRLNKVISELHGKNIEDVIAQGIGKLASVPAGGAVAVSAAPGSAAPAAGSAPAAAEEKKEEKKEESEESDDDMGFGLFD.

Position 1 is an N-acetylmethionine (Met-1). 2 positions are modified to phosphoserine: Ser-17 and Ser-19. Residue Lys-21 is modified to N6-acetyllysine; alternate. At Lys-21 the chain carries N6-succinyllysine; alternate. Positions 76–90 (APGSAAPAAGSAPAA) are enriched in low complexity. The disordered stretch occupies residues 76–115 (APGSAAPAAGSAPAAAEEKKEEKKEESEESDDDMGFGLFD). A phosphoserine mark is found at Ser-79 and Ser-86. The span at 91 to 101 (AEEKKEEKKEE) shows a compositional bias: basic and acidic residues. Residues Ser-102 and Ser-105 each carry the phosphoserine modification.

It belongs to the eukaryotic ribosomal protein P1/P2 family. As to quaternary structure, heterodimer with RPLP1 at the lateral ribosomal stalk of the large ribosomal subunit.

Functionally, plays an important role in the elongation step of protein synthesis. This is Large ribosomal subunit protein P2 (RPLP2) from Bos taurus (Bovine).